The primary structure comprises 460 residues: Bifunctional protein GlmU (460 aa).

The segment at 1-229 (MTNYAIILAA…FNESLGVNDR (229 aa)) is pyrophosphorylase. UDP-N-acetyl-alpha-D-glucosamine contacts are provided by residues 8–11 (LAAG), Lys22, Gln72, and 77–78 (GT). Asp102 provides a ligand contact to Mg(2+). 4 residues coordinate UDP-N-acetyl-alpha-D-glucosamine: Gly139, Glu154, Asn169, and Asn227. Asn227 is a binding site for Mg(2+). Residues 230–250 (VALATAETVMRQRITQKHMVN) form a linker region. Positions 251–460 (GVTFHNPETV…RLAHHPSRSK (210 aa)) are N-acetyltransferase. UDP-N-acetyl-alpha-D-glucosamine-binding residues include Arg332 and Lys350. His362 acts as the Proton acceptor in catalysis. UDP-N-acetyl-alpha-D-glucosamine-binding residues include Tyr365 and Asn376. Residues Ala379, 385 to 386 (NY), Ser404, Ala422, and Arg439 contribute to the acetyl-CoA site.

This sequence in the N-terminal section; belongs to the N-acetylglucosamine-1-phosphate uridyltransferase family. It in the C-terminal section; belongs to the transferase hexapeptide repeat family. As to quaternary structure, homotrimer. Mg(2+) is required as a cofactor.

The protein localises to the cytoplasm. The enzyme catalyses alpha-D-glucosamine 1-phosphate + acetyl-CoA = N-acetyl-alpha-D-glucosamine 1-phosphate + CoA + H(+). It catalyses the reaction N-acetyl-alpha-D-glucosamine 1-phosphate + UTP + H(+) = UDP-N-acetyl-alpha-D-glucosamine + diphosphate. It participates in nucleotide-sugar biosynthesis; UDP-N-acetyl-alpha-D-glucosamine biosynthesis; N-acetyl-alpha-D-glucosamine 1-phosphate from alpha-D-glucosamine 6-phosphate (route II): step 2/2. Its pathway is nucleotide-sugar biosynthesis; UDP-N-acetyl-alpha-D-glucosamine biosynthesis; UDP-N-acetyl-alpha-D-glucosamine from N-acetyl-alpha-D-glucosamine 1-phosphate: step 1/1. It functions in the pathway bacterial outer membrane biogenesis; LPS lipid A biosynthesis. Its function is as follows. Catalyzes the last two sequential reactions in the de novo biosynthetic pathway for UDP-N-acetylglucosamine (UDP-GlcNAc). The C-terminal domain catalyzes the transfer of acetyl group from acetyl coenzyme A to glucosamine-1-phosphate (GlcN-1-P) to produce N-acetylglucosamine-1-phosphate (GlcNAc-1-P), which is converted into UDP-GlcNAc by the transfer of uridine 5-monophosphate (from uridine 5-triphosphate), a reaction catalyzed by the N-terminal domain. This Streptococcus pyogenes serotype M49 (strain NZ131) protein is Bifunctional protein GlmU.